The chain runs to 263 residues: Small ribosomal subunit protein eS4, X isoform (263 aa).

One can recognise an S4 RNA-binding domain in the interval 42–104 (LPLIIFLRNR…TGEHFRLVYD (63 aa)). A Glycyl lysine isopeptide (Lys-Gly) (interchain with G-Cter in SUMO2) cross-link involves residue K230. An N6-acetyllysine modification is found at K233.

The protein belongs to the eukaryotic ribosomal protein eS4 family. As to quaternary structure, component of the small ribosomal subunit. Part of the small subunit (SSU) processome, composed of more than 70 proteins and the RNA chaperone small nucleolar RNA (snoRNA) U3. Identified in a IGF2BP1-dependent mRNP granule complex containing untranslated mRNAs.

The protein localises to the cytoplasm. Its subcellular location is the nucleus. It localises to the nucleolus. Component of the small ribosomal subunit. The ribosome is a large ribonucleoprotein complex responsible for the synthesis of proteins in the cell. Part of the small subunit (SSU) processome, first precursor of the small eukaryotic ribosomal subunit. During the assembly of the SSU processome in the nucleolus, many ribosome biogenesis factors, an RNA chaperone and ribosomal proteins associate with the nascent pre-rRNA and work in concert to generate RNA folding, modifications, rearrangements and cleavage as well as targeted degradation of pre-ribosomal RNA by the RNA exosome. In Monodelphis domestica (Gray short-tailed opossum), this protein is Small ribosomal subunit protein eS4, X isoform (RPS4X).